The chain runs to 236 residues: MNPTRGAVGGTDPRPAAVVLLSGGLDSATVLAIANQQGFACHALSFRYGQRHEVELAAARRVASALGVVRHVVVDIDLGVFGGSALTDPTIAVPAAGTAEEIPVTYVPARNTIFLSFGLALAETAGAWDVFIGASSVDYSGYPDCRPEYLAAYQAMANLATKATVSGERTLSVHAPLMHLSKADTIRLGLSLGVDYGLTHSCYDPGPDGRPCGRCDSCSLRERGFTEVGVPDPAGG.

21-31 (LSGGLDSATVL) is an ATP binding site. The Zn(2+) site is built by Cys-202, Cys-212, Cys-215, and Cys-218.

The protein belongs to the QueC family. Zn(2+) serves as cofactor.

It catalyses the reaction 7-carboxy-7-deazaguanine + NH4(+) + ATP = 7-cyano-7-deazaguanine + ADP + phosphate + H2O + H(+). Its pathway is purine metabolism; 7-cyano-7-deazaguanine biosynthesis. Catalyzes the ATP-dependent conversion of 7-carboxy-7-deazaguanine (CDG) to 7-cyano-7-deazaguanine (preQ(0)). The sequence is that of 7-cyano-7-deazaguanine synthase from Frankia casuarinae (strain DSM 45818 / CECT 9043 / HFP020203 / CcI3).